The sequence spans 307 residues: 4-hydroxythreonine-4-phosphate dehydrogenase (307 aa).

2 residues coordinate substrate: His-126 and Thr-127. A divalent metal cation-binding residues include His-156, His-195, and His-251. Lys-259, Asn-268, and Arg-277 together coordinate substrate.

Belongs to the PdxA family. As to quaternary structure, homodimer. The cofactor is Zn(2+). Mg(2+) is required as a cofactor. It depends on Co(2+) as a cofactor.

It localises to the cytoplasm. The enzyme catalyses 4-(phosphooxy)-L-threonine + NAD(+) = 3-amino-2-oxopropyl phosphate + CO2 + NADH. It participates in cofactor biosynthesis; pyridoxine 5'-phosphate biosynthesis; pyridoxine 5'-phosphate from D-erythrose 4-phosphate: step 4/5. Functionally, catalyzes the NAD(P)-dependent oxidation of 4-(phosphooxy)-L-threonine (HTP) into 2-amino-3-oxo-4-(phosphooxy)butyric acid which spontaneously decarboxylates to form 3-amino-2-oxopropyl phosphate (AHAP). This chain is 4-hydroxythreonine-4-phosphate dehydrogenase, found in Helicobacter pylori (strain ATCC 700392 / 26695) (Campylobacter pylori).